The sequence spans 313 residues: MRPLAVVGPTGTGKSDLALGIAEALSGEIAVEVVNADAMQLYRGMDIGTAKLTVDERRGVPHHQLDVLEVTETATVARYQQAAAADVDAIAARGALPVIVGGSMLYVQSLLDEWSFPATDPQVRARWETRLAEVGVAALHRELAAVDAAAAASILPTDGRRIVRALEVVELTGRPFAASAPTIGAPRWNTAIVGLDWETTVLDERLRRRTDTMFERGLVEEVRGLIGRGLRDGVTAARALGYAQVLADLDAGGDGEAAREPTFVGTRRYVRRQRSWFRRDHRITWLDGAAPGNVDAVLRLWRQRRAGAPRPAD.

Residue 8–15 (GPTGTGKS) participates in ATP binding. 10–15 (TGTGKS) serves as a coordination point for substrate.

The protein belongs to the IPP transferase family. Monomer. Mg(2+) serves as cofactor.

The catalysed reaction is adenosine(37) in tRNA + dimethylallyl diphosphate = N(6)-dimethylallyladenosine(37) in tRNA + diphosphate. Functionally, catalyzes the transfer of a dimethylallyl group onto the adenine at position 37 in tRNAs that read codons beginning with uridine, leading to the formation of N6-(dimethylallyl)adenosine (i(6)A). This Mycolicibacterium gilvum (strain PYR-GCK) (Mycobacterium gilvum (strain PYR-GCK)) protein is tRNA dimethylallyltransferase.